We begin with the raw amino-acid sequence, 507 residues long: Probable circularly permuted 1,3-beta-glucanase P23A10.11c YJL171C (507 aa).

The N-terminal stretch at 1 to 22 (MIAKSFIASFLFLCFAFSGVKA) is a signal peptide. Low complexity predominate over residues 228–264 (AAPPDSASESTPASTSYASSTTSATSTSTTSGSSGSS). Positions 228–266 (AAPPDSASESTPASTSYASSTTSATSTSTTSGSSGSSDW) are disordered. The short motif at 412–417 (EFDIFE) is the ExDxxE motif element. Asn-480 carries N-linked (GlcNAc...) asparagine glycosylation.

The protein belongs to the PGA52 family.

Its subcellular location is the secreted. The catalysed reaction is Hydrolysis of (1-&gt;3)-beta-D-glucosidic linkages in (1-&gt;3)-beta-D-glucans.. Functionally, probable circularly permuted 1,3-beta-glucanase involved in cell wall modification through beta-1,3-glucan network alterations such as increased branching or remodeling. The protein is Probable circularly permuted 1,3-beta-glucanase P23A10.11c YJL171C of Schizosaccharomyces pombe (strain 972 / ATCC 24843) (Fission yeast).